The chain runs to 932 residues: PMS1 protein homolog 1 (932 aa).

Positions 465-493 are disordered; sequence TQSENGNKDHIDESGENEEEAGLENSSEI. The HMG box DNA-binding region spans 571-639; that stretch reads IKKPMSASAL…RYNSQMKRAI (69 aa).

It belongs to the DNA mismatch repair MutL/HexB family. Component of the DNA mismatch repair (MMR) complex composed at least of MSH2, MSH3, MSH6, PMS1 and MLH1. The MutL-beta complex is a heterodimer of PMS1 and MLH1. Interacts with MCM9.

The protein localises to the nucleus. Probably involved in the repair of mismatches in DNA. This Homo sapiens (Human) protein is PMS1 protein homolog 1 (PMS1).